We begin with the raw amino-acid sequence, 339 residues long: Terpene synthase 7 (339 aa).

Residues 79–84 carry the DDxx(x)D/E motif motif; sequence DDFLES. The NDxxSxxxD/E motif signature appears at 219-227; it reads NDCASYAKE.

Belongs to the terpene synthase family.

The catalysed reaction is (2E,6E)-farnesyl diphosphate = (-)-beta-barbatene + diphosphate. Functionally, terpene synthase that converts its substrate farnesyl diphosphate (FPP) into the sesquiterpene beta-barbatene. This chain is Terpene synthase 7, found in Dictyostelium discoideum (Social amoeba).